A 273-amino-acid polypeptide reads, in one-letter code: Exosporium protein C (273 aa).

It localises to the spore wall. This Clostridium sporogenes (strain ATCC 15579) protein is Exosporium protein C.